A 179-amino-acid chain; its full sequence is Peptidyl-tRNA hydrolase (179 aa).

Tyrosine 15 serves as a coordination point for tRNA. Histidine 20 acts as the Proton acceptor in catalysis. TRNA contacts are provided by tyrosine 66, asparagine 68, and asparagine 114.

Belongs to the PTH family. As to quaternary structure, monomer.

It is found in the cytoplasm. The enzyme catalyses an N-acyl-L-alpha-aminoacyl-tRNA + H2O = an N-acyl-L-amino acid + a tRNA + H(+). Its function is as follows. Hydrolyzes ribosome-free peptidyl-tRNAs (with 1 or more amino acids incorporated), which drop off the ribosome during protein synthesis, or as a result of ribosome stalling. In terms of biological role, catalyzes the release of premature peptidyl moieties from peptidyl-tRNA molecules trapped in stalled 50S ribosomal subunits, and thus maintains levels of free tRNAs and 50S ribosomes. This Chlamydia trachomatis serovar L2b (strain UCH-1/proctitis) protein is Peptidyl-tRNA hydrolase.